We begin with the raw amino-acid sequence, 289 residues long: Protease HtpX (289 aa).

2 consecutive transmembrane segments (helical) span residues 5-25 (IVLF…VMSL) and 33-53 (MSGL…ISLL). Position 140 (H140) interacts with Zn(2+). E141 is a catalytic residue. Position 144 (H144) interacts with Zn(2+). The next 2 helical transmembrane spans lie at 155 to 175 (LLQG…GGFI) and 193 to 213 (GIVL…TMWF). Residue E218 participates in Zn(2+) binding.

It belongs to the peptidase M48B family. Zn(2+) serves as cofactor.

Its subcellular location is the cell inner membrane. In Xylella fastidiosa (strain M12), this protein is Protease HtpX.